Here is a 101-residue protein sequence, read N- to C-terminus: NADH-quinone oxidoreductase subunit K (101 aa).

The next 3 helical transmembrane spans lie at 4–24 (LGHL…GIFL), 30–50 (IVLL…FIAF), and 62–82 (FVFF…AILV).

The protein belongs to the complex I subunit 4L family. NDH-1 is composed of 14 different subunits. Subunits NuoA, H, J, K, L, M, N constitute the membrane sector of the complex.

The protein resides in the cell inner membrane. It carries out the reaction a quinone + NADH + 5 H(+)(in) = a quinol + NAD(+) + 4 H(+)(out). Functionally, NDH-1 shuttles electrons from NADH, via FMN and iron-sulfur (Fe-S) centers, to quinones in the respiratory chain. The immediate electron acceptor for the enzyme in this species is believed to be ubiquinone. Couples the redox reaction to proton translocation (for every two electrons transferred, four hydrogen ions are translocated across the cytoplasmic membrane), and thus conserves the redox energy in a proton gradient. The polypeptide is NADH-quinone oxidoreductase subunit K (Xylella fastidiosa (strain Temecula1 / ATCC 700964)).